A 487-amino-acid polypeptide reads, in one-letter code: NADH-quinone oxidoreductase subunit N (487 aa).

13 helical membrane-spanning segments follow: residues 7–27 (ILGP…LLMV), 38–58 (LVGL…GLGA), 79–99 (YAKA…MVWL), 111–131 (ILVL…DLIA), 164–184 (FVLG…VYGF), 207–227 (LLIG…AVPF), 238–258 (APTP…LTLF), 276–296 (VIIL…IVQT), 301–321 (LMAY…AAGT), 328–348 (VLVY…VILA), 373–393 (AAAM…AGFF), 406–426 (GLFA…FYYL), and 451–471 (VILI…SVVV).

It belongs to the complex I subunit 2 family. NDH-1 is composed of 14 different subunits. Subunits NuoA, H, J, K, L, M, N constitute the membrane sector of the complex.

It is found in the cell inner membrane. The catalysed reaction is a quinone + NADH + 5 H(+)(in) = a quinol + NAD(+) + 4 H(+)(out). NDH-1 shuttles electrons from NADH, via FMN and iron-sulfur (Fe-S) centers, to quinones in the respiratory chain. The immediate electron acceptor for the enzyme in this species is believed to be ubiquinone. Couples the redox reaction to proton translocation (for every two electrons transferred, four hydrogen ions are translocated across the cytoplasmic membrane), and thus conserves the redox energy in a proton gradient. In Rhodospirillum rubrum (strain ATCC 11170 / ATH 1.1.1 / DSM 467 / LMG 4362 / NCIMB 8255 / S1), this protein is NADH-quinone oxidoreductase subunit N.